Reading from the N-terminus, the 226-residue chain is Gap junction beta-2 protein (226 aa).

The stretch at 2 to 13 is an intramembrane region; sequence DWSALQTILGGV. The Cytoplasmic segment spans residues 14–20; the sequence is NKHSTSI. The chain crosses the membrane as a helical span at residues 21–40; it reads GKIWLTVLFIFRIMILVVAA. Residues 41 to 73 lie on the Extracellular side of the membrane; that stretch reads KEVWGDEQADFVCNTLQPGCKNVCYDHYFPISH. The Ca(2+) site is built by Glu-42, Gly-45, and Glu-47. Disulfide bonds link Cys-53-Cys-180, Cys-60-Cys-174, and Cys-64-Cys-169. The helical transmembrane segment at 74–94 threads the bilayer; sequence IRLWALQLIFVSTPALLVAMH. The Cytoplasmic segment spans residues 95 to 135; it reads VAYYRHEKKRKFIRGEIKTEFKDIEEIKNQKVRIEGSLWWT. A helical transmembrane segment spans residues 136–156; the sequence is YTGSIFFRVIFEAAFMYVFYV. Residues 157 to 189 lie on the Extracellular side of the membrane; it reads MYDGFAMQRLVKCNAWPCPNTVDCFVSRPTEKT. A helical membrane pass occupies residues 190–210; that stretch reads VFTVFMIAVSGICILLNVTEL. At 211 to 226 the chain is on the cytoplasmic side; it reads CYLLIRFCSGKSKKPV.

Belongs to the connexin family. Beta-type (group I) subfamily. In terms of assembly, a hemichannel or connexon is composed of a hexamer of connexins. A functional gap junction is formed by the apposition of two hemichannels. Forms heteromeric channels with GJB4. Interacts with CNST.

The protein localises to the cell membrane. The protein resides in the cell junction. It is found in the gap junction. Its function is as follows. Structural component of gap junctions. Gap junctions are dodecameric channels that connect the cytoplasm of adjoining cells. They are formed by the docking of two hexameric hemichannels, one from each cell membrane. Small molecules and ions diffuse from one cell to a neighboring cell via the central pore. The polypeptide is Gap junction beta-2 protein (GJB2) (Ovis aries (Sheep)).